The chain runs to 320 residues: Glutaminyl-peptide cyclotransferase (320 aa).

Over residues Met-1–Lys-12 the composition is skewed to basic residues. Residues Met-1–Ser-22 are disordered. Residues Met-1 to Arg-36 are Cytoplasmic-facing. The helical; Signal-anchor for type II membrane protein transmembrane segment at Phe-37–Phe-57 threads the bilayer. Topologically, residues Asn-58 to Val-320 are lumenal. 2 N-linked (GlcNAc...) asparagine glycosylation sites follow: Asn-99 and Asn-163.

It belongs to the plant glutaminyl-peptide cyclotransferase family. In terms of processing, glycosylated.

It localises to the endoplasmic reticulum membrane. It carries out the reaction N-terminal L-glutaminyl-[peptide] = N-terminal 5-oxo-L-prolyl-[peptide] + NH4(+). Functionally, converts glutamine and N-terminal glutamyl residues in peptides to 5-oxoproline and 5-oxoproline residues. Not involved in the major pathway for 5-oxoproline production. This is Glutaminyl-peptide cyclotransferase (QCT) from Arabidopsis thaliana (Mouse-ear cress).